A 567-amino-acid polypeptide reads, in one-letter code: DNA ligase B (567 aa).

The active-site N6-AMP-lysine intermediate is the Lys-132.

This sequence belongs to the NAD-dependent DNA ligase family. LigB subfamily.

It catalyses the reaction NAD(+) + (deoxyribonucleotide)n-3'-hydroxyl + 5'-phospho-(deoxyribonucleotide)m = (deoxyribonucleotide)n+m + AMP + beta-nicotinamide D-nucleotide.. Catalyzes the formation of phosphodiester linkages between 5'-phosphoryl and 3'-hydroxyl groups in double-stranded DNA using NAD as a coenzyme and as the energy source for the reaction. In Yersinia pseudotuberculosis serotype O:1b (strain IP 31758), this protein is DNA ligase B.